The primary structure comprises 98 residues: Aspartyl/glutamyl-tRNA(Asn/Gln) amidotransferase subunit C (98 aa).

A disordered region spans residues 70–98; sequence PSLTPEQALSGAPAQEQQRFKVPQILGED.

The protein belongs to the GatC family. Heterotrimer of A, B and C subunits.

The catalysed reaction is L-glutamyl-tRNA(Gln) + L-glutamine + ATP + H2O = L-glutaminyl-tRNA(Gln) + L-glutamate + ADP + phosphate + H(+). The enzyme catalyses L-aspartyl-tRNA(Asn) + L-glutamine + ATP + H2O = L-asparaginyl-tRNA(Asn) + L-glutamate + ADP + phosphate + 2 H(+). Allows the formation of correctly charged Asn-tRNA(Asn) or Gln-tRNA(Gln) through the transamidation of misacylated Asp-tRNA(Asn) or Glu-tRNA(Gln) in organisms which lack either or both of asparaginyl-tRNA or glutaminyl-tRNA synthetases. The reaction takes place in the presence of glutamine and ATP through an activated phospho-Asp-tRNA(Asn) or phospho-Glu-tRNA(Gln). This chain is Aspartyl/glutamyl-tRNA(Asn/Gln) amidotransferase subunit C, found in Streptomyces avermitilis (strain ATCC 31267 / DSM 46492 / JCM 5070 / NBRC 14893 / NCIMB 12804 / NRRL 8165 / MA-4680).